Reading from the N-terminus, the 83-residue chain is SPbeta prophage-derived uncharacterized protein YopE (83 aa).

A run of 2 helical transmembrane segments spans residues 5–25 and 60–80; these read AYFLIIWLGVGLLTGIKFIFV and VIAFFMLIGLLPLAMRITKLF.

The protein resides in the cell membrane. This Bacillus subtilis (strain 168) protein is SPbeta prophage-derived uncharacterized protein YopE (yopE).